The primary structure comprises 420 residues: Pyridinium-3,5-bisthiocarboxylic acid mononucleotide nickel insertion protein (420 aa).

The tract at residues 81 to 104 (NHEHKHNHHEIKNDEPAHSHEHHH) is disordered. Basic and acidic residues predominate over residues 90–99 (EIKNDEPAHS).

It belongs to the LarC family.

The catalysed reaction is Ni(II)-pyridinium-3,5-bisthiocarboxylate mononucleotide = pyridinium-3,5-bisthiocarboxylate mononucleotide + Ni(2+). Functionally, involved in the biosynthesis of a nickel-pincer cofactor ((SCS)Ni(II) pincer complex). Binds Ni(2+), and functions in nickel delivery to pyridinium-3,5-bisthiocarboxylic acid mononucleotide (P2TMN), to form the mature cofactor. Is thus probably required for the activation of nickel-pincer cofactor-dependent enzymes. This Clostridium acetobutylicum (strain ATCC 824 / DSM 792 / JCM 1419 / IAM 19013 / LMG 5710 / NBRC 13948 / NRRL B-527 / VKM B-1787 / 2291 / W) protein is Pyridinium-3,5-bisthiocarboxylic acid mononucleotide nickel insertion protein.